The following is a 684-amino-acid chain: Coiled-coil domain-containing protein 62 (684 aa).

2 coiled-coil regions span residues 11–160 and 199–322; these read RQNI…QALT and TCIV…ESKA. A disordered region spans residues 579 to 603; it reads SLGSSKSALREDETESSSNKKNSPT. Residues 594-603 are compositionally biased toward polar residues; sequence SSSNKKNSPT. 2 consecutive short sequence motifs (LXXLL motif) follow at residues 634-638 and 650-654; these read LQRLL and LSTLL. Positions 657–684 are disordered; that stretch reads SHENLTGSATNKSEVPEESAQKNTFVSY. Residues 659–669 are compositionally biased toward polar residues; it reads ENLTGSATNKS.

In terms of assembly, interacts with ESR1 and ESR2 in the presence of estradiol/E2. The interaction with ESR2 recruits CCDC62 to ER target genes, including cyclin-D1/CCND1 AP-1 promoter. Interacts with GOPC. As to expression, highly expressed in adult testis. Expressed in both prostate epithelial and stromal cells, with predominant expression in epithelial cells (at protein level). Not detected in prostate by RT-PCR. Overexpressed in various cancers.

It localises to the cytoplasm. The protein localises to the nucleus. The protein resides in the cytoplasmic vesicle. It is found in the secretory vesicle. Its subcellular location is the acrosome. Nuclear receptor coactivator that can enhance preferentially estrogen receptors ESR1 and ESR2 transactivation. Also modulates progesterone/PGR, glucocorticoid/NR3C1 and androgen/AR receptors transactivation, although at lower level; little effect on vitamin D receptor/VDR. Required for normal spermiogenesis. It probably plays a role in acrosome formation. This Homo sapiens (Human) protein is Coiled-coil domain-containing protein 62 (CCDC62).